Here is a 557-residue protein sequence, read N- to C-terminus: Aspartate--tRNA ligase (557 aa).

Residue Glu-168 coordinates L-aspartate. The segment at 192–195 is aspartate; sequence QIYK. An L-aspartate-binding site is contributed by Arg-214. Residues 214-216 and Gln-223 contribute to the ATP site; that span reads RDE. His-423 serves as a coordination point for L-aspartate. An ATP-binding site is contributed by Glu-457. Arg-464 contributes to the L-aspartate binding site. 505–508 provides a ligand contact to ATP; that stretch reads GLDR.

This sequence belongs to the class-II aminoacyl-tRNA synthetase family. Type 1 subfamily. Homodimer.

Its subcellular location is the cytoplasm. The enzyme catalyses tRNA(Asp) + L-aspartate + ATP = L-aspartyl-tRNA(Asp) + AMP + diphosphate. In terms of biological role, catalyzes the attachment of L-aspartate to tRNA(Asp) in a two-step reaction: L-aspartate is first activated by ATP to form Asp-AMP and then transferred to the acceptor end of tRNA(Asp). This chain is Aspartate--tRNA ligase, found in Mycoplasma pneumoniae (strain ATCC 29342 / M129 / Subtype 1) (Mycoplasmoides pneumoniae).